A 331-amino-acid chain; its full sequence is MSPDGNHSSDPTEFVLAGLPNLNSARVELFSVFLLVYLLNLTGNVLIVGVVRADTRLQTPMYFFLGNLSCLEILLTSVIIPKMLSNFLSRQHTISFAACITQFYFYFFLGASEFLLLAVMSADRYLAICHPLRYPLLMSGAVCFRVALACWVGGLVPVLGPTVAVALLPFCKQGAVVQHFFCDSGPLLRLACTNTKKLEETDFVLASLVIVSSLLITAVSYGLIVLAVLSIPSASGRQKAFSTCTSHLIVVTLFYGSAIFLYVRPSQSGSVDTNWAVTVITTFVTPLLNPFIYALRNEQVKEALKDMFRKVVAGVLGNLLLDKCLSEKAVK.

Residues 1-29 lie on the Extracellular side of the membrane; that stretch reads MSPDGNHSSDPTEFVLAGLPNLNSARVEL. Asn6 is a glycosylation site (N-linked (GlcNAc...) asparagine). Residues 30–50 traverse the membrane as a helical segment; sequence FSVFLLVYLLNLTGNVLIVGV. Topologically, residues 51 to 59 are cytoplasmic; the sequence is VRADTRLQT. Residues 60–80 form a helical membrane-spanning segment; the sequence is PMYFFLGNLSCLEILLTSVII. Residues 81–99 are Extracellular-facing; the sequence is PKMLSNFLSRQHTISFAAC. An intrachain disulfide couples Cys99 to Cys182. A helical transmembrane segment spans residues 100–120; it reads ITQFYFYFFLGASEFLLLAVM. At 121 to 147 the chain is on the cytoplasmic side; sequence SADRYLAICHPLRYPLLMSGAVCFRVA. The helical transmembrane segment at 148-168 threads the bilayer; that stretch reads LACWVGGLVPVLGPTVAVALL. The Extracellular portion of the chain corresponds to 169-207; the sequence is PFCKQGAVVQHFFCDSGPLLRLACTNTKKLEETDFVLAS. Residues 208-228 form a helical membrane-spanning segment; it reads LVIVSSLLITAVSYGLIVLAV. Residues 229-242 lie on the Cytoplasmic side of the membrane; sequence LSIPSASGRQKAFS. The helical transmembrane segment at 243–263 threads the bilayer; it reads TCTSHLIVVTLFYGSAIFLYV. Residues 264-274 are Extracellular-facing; the sequence is RPSQSGSVDTN. The chain crosses the membrane as a helical span at residues 275–295; sequence WAVTVITTFVTPLLNPFIYAL. At 296-331 the chain is on the cytoplasmic side; it reads RNEQVKEALKDMFRKVVAGVLGNLLLDKCLSEKAVK.

The protein belongs to the G-protein coupled receptor 1 family.

It is found in the cell membrane. Its function is as follows. Odorant receptor. The sequence is that of Olfactory receptor 6S1 (OR6S1) from Homo sapiens (Human).